Reading from the N-terminus, the 1106-residue chain is Communication mutant protein F (1106 aa).

The signal sequence occupies residues 1-28 (MKIYKKNHFLKILIIFIYLSCNILKVNA). One can recognise a G8 domain in the interval 254-380 (TIWPNGVVPS…YHNTWSKLAS (127 aa)). 7 N-linked (GlcNAc...) asparagine glycosylation sites follow: Asn267, Asn306, Asn512, Asn536, Asn677, Asn715, and Asn833.

The protein belongs to the comF family.

The protein localises to the secreted. In Dictyostelium discoideum (Social amoeba), this protein is Communication mutant protein F (comF-1).